A 332-amino-acid chain; its full sequence is Inositol 2-dehydrogenase 2 (332 aa).

The protein belongs to the Gfo/Idh/MocA family. As to quaternary structure, homotetramer.

The enzyme catalyses myo-inositol + NAD(+) = scyllo-inosose + NADH + H(+). Functionally, involved in the oxidation of myo-inositol (MI) to 2-keto-myo-inositol (2KMI or 2-inosose). The chain is Inositol 2-dehydrogenase 2 from Paenarthrobacter aurescens (strain TC1).